Reading from the N-terminus, the 447-residue chain is GTPase Der (447 aa).

EngA-type G domains lie at 3–167 (PVIA…FAER) and 181–354 (TRIA…AAAM). Residues 9 to 16 (GRPNVGKS), 56 to 60 (DTGGF), 119 to 122 (NKAE), 187 to 194 (GRPNVGKS), 234 to 238 (DTAGL), and 299 to 302 (NKWD) each bind GTP. Positions 355–439 (VKLPTPKLTR…PLRIEFRTNK (85 aa)) constitute a KH-like domain.

It belongs to the TRAFAC class TrmE-Era-EngA-EngB-Septin-like GTPase superfamily. EngA (Der) GTPase family. Associates with the 50S ribosomal subunit.

Functionally, GTPase that plays an essential role in the late steps of ribosome biogenesis. This is GTPase Der from Ralstonia nicotianae (strain ATCC BAA-1114 / GMI1000) (Ralstonia solanacearum).